The chain runs to 106 residues: uncharacterized protein (106 aa).

Over residues 24–35 (ANSISSTSFYHK) the composition is skewed to polar residues. Disordered regions lie at residues 24-49 (ANSI…SCEE) and 65-87 (LTAE…SSDE). 2 stretches are compositionally biased toward low complexity: residues 36 to 46 (SSNNNSHANAS) and 74 to 85 (SLSASNQPASSS).

This is an uncharacterized protein from Arabidopsis thaliana (Mouse-ear cress).